Consider the following 244-residue polypeptide: MTMPFYVSPEQLMKDRADFARKGIARGRSVVVLGYDGGILFATENPSRALHKISEIYDRIAFAAVGKYNEFENLRVAGVRYADLRGYSYDRKDVTARGLANAYAQTLGTVFTTESKPLEVELVVAEVGDTPEADQIYRLSYDGSVADEHGHVAMGGQAEQLGKRLDDGWREGLTLTEALDLATTTLGAVGTDGQLLAAGSERTIDAGQLEVAVLDRARPRRAFRRLHGAALTHGRGAPHGEGAR.

This sequence belongs to the peptidase T1A family. The 20S proteasome core is composed of 14 alpha and 14 beta subunits that assemble into four stacked heptameric rings, resulting in a barrel-shaped structure. The two inner rings, each composed of seven catalytic beta subunits, are sandwiched by two outer rings, each composed of seven alpha subunits. The catalytic chamber with the active sites is on the inside of the barrel. Has a gated structure, the ends of the cylinder being occluded by the N-termini of the alpha-subunits. Is capped by the proteasome-associated ATPase, ARC.

The protein resides in the cytoplasm. It participates in protein degradation; proteasomal Pup-dependent pathway. Its activity is regulated as follows. The formation of the proteasomal ATPase ARC-20S proteasome complex, likely via the docking of the C-termini of ARC into the intersubunit pockets in the alpha-rings, may trigger opening of the gate for substrate entry. Interconversion between the open-gate and close-gate conformations leads to a dynamic regulation of the 20S proteasome proteolysis activity. Its function is as follows. Component of the proteasome core, a large protease complex with broad specificity involved in protein degradation. The sequence is that of Proteasome subunit alpha from Xylanimonas cellulosilytica (strain DSM 15894 / JCM 12276 / CECT 5975 / KCTC 9989 / LMG 20990 / NBRC 107835 / XIL07).